The primary structure comprises 750 residues: MRIEKHRTPLSKGIIWTILSVCLLFMFTTLILVIVATAGSTANYKPLTNIYIGEADIKHINVSKVIPQIGPILTILGSALTAPNSSLDDIFGAMKNIADTPALTPLLTLLSNADNTTVTIESLTELAPLAISGNPASSTRQLTEINGLLKYSDNATETLDGLSRLVSASLSSASSNSSSDSTTLVLDLLKDSDNPQNSTDALLTLNNLTMSEKAQLLPVFRLFAFSTNQTATMTALATLMNTTISSSLAQTLLTQLQNTISNGGSLNNTFSTLQPLVPQASAPAFDAVELLLNQTTSTNQTLSTLSDLLEQNLTQSSSAKKAFAALTQLMENSDNSTMVVTSVQSLAAVTNTTQSTQQLIGLDDVISSSSNTNETLSILSELQSGLSGNSSSVQYIPYLFSLLGASTDPKTTFSSLVTLTSWAQENPQTFLPILDILADAKSVQPISAEELNAMTPNILEYLKIPIYYRLSIFTLCHANLENKILDCNSPHAVQNLDFRSIIYDALVTSDFQPYLNALNISANDLYLEGKLLHREHQYVPAVRSVLALNLLAIIFSFFTMIFIILLYFNRYMFKQPLWLIALALHVCVGVATVLAAIIISVMIAIIKSGTADDKYGVVFKAGPAYTGLIWTAFALSFIATGLIIYTWWRNRRSGRYMSGSVTNRKGEIYTYGDGSAISADRFGDHNLGDDDDADFEKQVNRNEITAIDNSSSANNTDVTGSTSNRTELSHPDVTPKDSNGPVNNNAHLVA.

N-linked (GlcNAc...) asparagine glycans are attached at residues Asn61, Asn84, Asn115, Asn154, Asn176, Asn197, Asn207, Asn228, Asn241, Asn267, Asn293, Asn299, Asn312, Asn335, Asn351, Asn373, Asn389, and Asn519. Residues Ser675 and Ser678 each carry the phosphoserine modification. Lys697 participates in a covalent cross-link: Glycyl lysine isopeptide (Lys-Gly) (interchain with G-Cter in ubiquitin). Polar residues-rich tracts occupy residues 703–726 and 736–750; these read EITA…SNRT and KDSN…HLVA. The disordered stretch occupies residues 703–750; it reads EITAIDNSSSANNTDVTGSTSNRTELSHPDVTPKDSNGPVNNNAHLVA. 3 N-linked (GlcNAc...) asparagine glycosylation sites follow: Asn709, Asn714, and Asn724.

Post-translationally, N-glycosylated.

The protein localises to the mitochondrion. This is an uncharacterized protein from Saccharomyces cerevisiae (strain ATCC 204508 / S288c) (Baker's yeast).